The primary structure comprises 650 residues: 1-deoxy-D-xylulose-5-phosphate synthase (650 aa).

Residues H87 and 128 to 130 (GHS) contribute to the thiamine diphosphate site. Position 159 (D159) interacts with Mg(2+). Residues 160 to 161 (GS), N188, Y299, and E383 each bind thiamine diphosphate. N188 contacts Mg(2+).

This sequence belongs to the transketolase family. DXPS subfamily. As to quaternary structure, homodimer. It depends on Mg(2+) as a cofactor. Thiamine diphosphate serves as cofactor.

It carries out the reaction D-glyceraldehyde 3-phosphate + pyruvate + H(+) = 1-deoxy-D-xylulose 5-phosphate + CO2. It participates in metabolic intermediate biosynthesis; 1-deoxy-D-xylulose 5-phosphate biosynthesis; 1-deoxy-D-xylulose 5-phosphate from D-glyceraldehyde 3-phosphate and pyruvate: step 1/1. Its function is as follows. Catalyzes the acyloin condensation reaction between C atoms 2 and 3 of pyruvate and glyceraldehyde 3-phosphate to yield 1-deoxy-D-xylulose-5-phosphate (DXP). This chain is 1-deoxy-D-xylulose-5-phosphate synthase, found in Syntrophus aciditrophicus (strain SB).